Here is a 168-residue protein sequence, read N- to C-terminus: Heat shock protein beta-9 (168 aa).

Residues 1-12 (MQRVGSSFSTGQ) show a composition bias toward polar residues. Disordered regions lie at residues 1–25 (MQRV…SRCP), 83–104 (TGQR…EQSV), and 129–168 (LWLR…VKNP). The sHSP domain maps to 38–151 (LPVRLLRDEV…EAQTGQSQKP (114 aa)). Basic and acidic residues predominate over residues 86 to 104 (RQHESNDPSRGRYRMEQSV). Polar residues predominate over residues 158–168 (SSLQNESVKNP).

This sequence belongs to the small heat shock protein (HSP20) family. As to expression, testis specific.

The protein localises to the cytoplasm. The protein resides in the nucleus. The polypeptide is Heat shock protein beta-9 (Hspb9) (Mus musculus (Mouse)).